The primary structure comprises 371 residues: Chorismate synthase (371 aa).

Residues arginine 48 and arginine 54 each contribute to the NADP(+) site. FMN is bound by residues 132–134 (RSS), 244–245 (NA), glycine 289, 304–308 (KPTSS), and arginine 330.

This sequence belongs to the chorismate synthase family. Homotetramer. Requires FMNH2 as cofactor.

It catalyses the reaction 5-O-(1-carboxyvinyl)-3-phosphoshikimate = chorismate + phosphate. The protein operates within metabolic intermediate biosynthesis; chorismate biosynthesis; chorismate from D-erythrose 4-phosphate and phosphoenolpyruvate: step 7/7. Functionally, catalyzes the anti-1,4-elimination of the C-3 phosphate and the C-6 proR hydrogen from 5-enolpyruvylshikimate-3-phosphate (EPSP) to yield chorismate, which is the branch point compound that serves as the starting substrate for the three terminal pathways of aromatic amino acid biosynthesis. This reaction introduces a second double bond into the aromatic ring system. This Methylobacterium nodulans (strain LMG 21967 / CNCM I-2342 / ORS 2060) protein is Chorismate synthase.